Consider the following 119-residue polypeptide: Large ribosomal subunit protein bL20 (119 aa).

The protein belongs to the bacterial ribosomal protein bL20 family.

Functionally, binds directly to 23S ribosomal RNA and is necessary for the in vitro assembly process of the 50S ribosomal subunit. It is not involved in the protein synthesizing functions of that subunit. In Xanthomonas oryzae pv. oryzae (strain KACC10331 / KXO85), this protein is Large ribosomal subunit protein bL20.